The chain runs to 340 residues: MRISIVGITGYSGMELLRILLQHPQAEVVSLHASQDMEAPASELYPHLKGICDLKIEAFDSQEIMRRADLVFFATSSGVAKDLSKDFVEAGFPVIDLSGDHRLPGNIYKKWYQKEPAEDYVQKAFIYGLSEFTDVRGERFIANPGCYATATELALIPLLKARAIELDFIIVDAKSGLTGAGKNPAASSHFVHVHDNYVTYKLNQHQHIPEIVQQLQRFDKRLQQIQFSTSLIPLNRGIVATVYSKLKEPLTREELAAIYQDCYQDKPFVRIQAALPNLHQVVGTNYTDIGFDYNPVTNILTVVAVLDNLIKGAAGQAVQNMNLMLGFPETDGLLSQPSYV.

C146 is a catalytic residue.

This sequence belongs to the NAGSA dehydrogenase family. Type 1 subfamily.

Its subcellular location is the cytoplasm. The enzyme catalyses N-acetyl-L-glutamate 5-semialdehyde + phosphate + NADP(+) = N-acetyl-L-glutamyl 5-phosphate + NADPH + H(+). It participates in amino-acid biosynthesis; L-arginine biosynthesis; N(2)-acetyl-L-ornithine from L-glutamate: step 3/4. Functionally, catalyzes the NADPH-dependent reduction of N-acetyl-5-glutamyl phosphate to yield N-acetyl-L-glutamate 5-semialdehyde. This Streptococcus sanguinis (strain SK36) protein is N-acetyl-gamma-glutamyl-phosphate reductase.